The primary structure comprises 108 residues: Precursor of CEP16 (108 aa).

A signal peptide spans 1–27; the sequence is MVMAKNLTKFYVVFLVVLMMVVSLLLA. Positions 28 to 92 are excised as a propeptide; the sequence is IEGRPVKDSS…VGHHRAKGYK (65 aa). N-linked (GlcNAc...) asparagine glycans are attached at residues Asn-50 and Asn-98. A disordered region spans residues 76–108; sequence QSGPSPGVGHHRAKGYKMFGRANDSGPSPGVGH. Hydroxyproline is present on residues Pro-102 and Pro-104.

It belongs to the C-terminally encoded plant signaling peptide (CEP) family. In terms of assembly, interacts with CEP receptors (e.g. CEPR1 and CEPR2). The mature small signaling peptide is generated by proteolytic processing of the longer precursor.

It is found in the secreted. Its subcellular location is the extracellular space. It localises to the apoplast. Functionally, extracellular signaling peptide that may regulate primary root growth rate and systemic nitrogen (N)-demand signaling. This Arabidopsis thaliana (Mouse-ear cress) protein is Precursor of CEP16.